We begin with the raw amino-acid sequence, 246 residues long: NAD-dependent protein deacylase (246 aa).

The Deacetylase sirtuin-type domain occupies 1–245 (MKEFITKHRD…ELIREILDNP (245 aa)). Position 20-39 (20-39 (GAGISAESGIPTFRGSEGLW)) interacts with NAD(+). Residues Tyr-64 and Arg-67 each coordinate substrate. 98–101 (QNVD) provides a ligand contact to NAD(+). The active-site Proton acceptor is His-116. The Zn(2+) site is built by Cys-124, Cys-127, Cys-146, and Cys-149. NAD(+) contacts are provided by residues 186–188 (GTS), 212–214 (NPE), and Thr-230.

It belongs to the sirtuin family. Class III subfamily. The cofactor is Zn(2+).

It localises to the cytoplasm. The enzyme catalyses N(6)-acetyl-L-lysyl-[protein] + NAD(+) + H2O = 2''-O-acetyl-ADP-D-ribose + nicotinamide + L-lysyl-[protein]. The catalysed reaction is N(6)-succinyl-L-lysyl-[protein] + NAD(+) + H2O = 2''-O-succinyl-ADP-D-ribose + nicotinamide + L-lysyl-[protein]. Its function is as follows. NAD-dependent lysine deacetylase and desuccinylase that specifically removes acetyl and succinyl groups on target proteins. Modulates the activities of several proteins which are inactive in their acylated form. This Leptospira interrogans serogroup Icterohaemorrhagiae serovar copenhageni (strain Fiocruz L1-130) protein is NAD-dependent protein deacylase.